The following is a 146-amino-acid chain: Large ribosomal subunit protein uL15 (146 aa).

The segment at 1–51 (MKLHELQPAAGSRKVRNRVGRGTSSGNGKTSGRGQKGQKARSGGGVRLGFE) is disordered. Gly residues-rich tracts occupy residues 23–35 (TSSGNGKTSGRGQ) and 42–51 (SGGGVRLGFE).

It belongs to the universal ribosomal protein uL15 family. Part of the 50S ribosomal subunit.

Functionally, binds to the 23S rRNA. This Streptococcus sanguinis (strain SK36) protein is Large ribosomal subunit protein uL15.